We begin with the raw amino-acid sequence, 331 residues long: Nucleotide sugar transporter SLC35B4 (331 aa).

A run of 11 helical transmembrane segments spans residues 4–24 (ALAV…LELL), 30–50 (GCGN…GFLF), 59–79 (PAIP…VSVV), 92–112 (LHMI…IIIL), 117–137 (SIFK…CTFM), 153–173 (GFQA…ALLM), 201–221 (ALPL…AVLF), 229–249 (IPGI…NIIT), 251–267 (YVCI…CASL), 268–288 (TVTL…ILYF), and 291–311 (PFTL…LMYT). The Mediates endoplasmic reticulum retention signature appears at 326–331 (KDNKKN).

It belongs to the nucleotide-sugar transporter family. SLC35B subfamily.

It is found in the endoplasmic reticulum membrane. The catalysed reaction is UDP-N-acetyl-alpha-D-glucosamine(in) + UDP-alpha-D-glucuronate(out) = UDP-N-acetyl-alpha-D-glucosamine(out) + UDP-alpha-D-glucuronate(in). The enzyme catalyses UDP-alpha-D-xylose(in) + UDP-alpha-D-glucuronate(out) = UDP-alpha-D-xylose(out) + UDP-alpha-D-glucuronate(in). Antiporter that transports nucleotide sugars across the endoplasmic reticulum (ER) membrane in exchange for another nucleotide sugar. May couple UDP-alpha-D-glucuronate (UDP-GlcA) or UDP-alpha-D-xylose (UDP-Xyl) efflux to UDP-alpha-D-glucuronate (UDP-GlcA) influx into the ER lumen, which in turn stimulates glucuronidation and excretion of endobiotics and xenobiotics. This chain is Nucleotide sugar transporter SLC35B4 (SLC35B4), found in Macaca fascicularis (Crab-eating macaque).